Here is an 89-residue protein sequence, read N- to C-terminus: UPF0175 protein APE_0276a (89 aa).

The protein belongs to the UPF0175 family.

In Aeropyrum pernix (strain ATCC 700893 / DSM 11879 / JCM 9820 / NBRC 100138 / K1), this protein is UPF0175 protein APE_0276a.